The sequence spans 206 residues: Carbonic anhydrase (206 aa).

K11 is covalently cross-linked (Isoglutamyl lysine isopeptide (Lys-Gln) (interchain with Q-Cter in protein Pup)). C51, D53, H104, and C107 together coordinate Zn(2+).

Belongs to the beta-class carbonic anhydrase family. Homotetramer. Zn(2+) serves as cofactor.

It catalyses the reaction hydrogencarbonate + H(+) = CO2 + H2O. Functionally, catalyzes the reversible hydration of carbon dioxide to form bicarbonate. The protein is Carbonic anhydrase (cynT) of Mycolicibacterium smegmatis (strain ATCC 700084 / mc(2)155) (Mycobacterium smegmatis).